The sequence spans 85 residues: U4-theraphotoxin-Hhn1a (85 aa).

Residues 1–22 (MKVTLISILTCAAVLVLHTTAA) form the signal peptide. Positions 23–48 (EELEAESQLMEVGMPDTELAAVDEER) are excised as a propeptide. 3 disulfides stabilise this stretch: Cys52–Cys66, Cys56–Cys77, and Cys71–Cys82.

The protein belongs to the neurotoxin 12 (Hwtx-2) family. 02 (Hwtx-2) subfamily. Monomer. In terms of tissue distribution, expressed by the venom gland.

Its subcellular location is the secreted. Its function is as follows. Neurotoxin active on both insects and mammals. The protein is U4-theraphotoxin-Hhn1a of Cyriopagopus hainanus (Chinese bird spider).